The primary structure comprises 74 residues: Large ribosomal subunit protein bL31 (74 aa).

It belongs to the bacterial ribosomal protein bL31 family. Type A subfamily. As to quaternary structure, part of the 50S ribosomal subunit.

Its function is as follows. Binds the 23S rRNA. The polypeptide is Large ribosomal subunit protein bL31 (Afipia carboxidovorans (strain ATCC 49405 / DSM 1227 / KCTC 32145 / OM5) (Oligotropha carboxidovorans)).